Here is a 1009-residue protein sequence, read N- to C-terminus: Glutamate receptor ionotropic, delta-1 (1009 aa).

Positions 1–20 are cleaved as a signal peptide; the sequence is MEALTLWLLPWICQCVTVRA. The interaction with CBLN1 stretch occupies residues 21 to 436; it reads DSIIHIGAIF…ERPMGSRLQG (416 aa). The Extracellular segment spans residues 21–562; it reads DSIIHIGAIF…SIFSLFAPFD (542 aa). Disulfide bonds link Cys80-Cys351, Cys96-Cys128, and Cys294-Cys306. N-linked (GlcNAc...) asparagine glycans are attached at residues Asn131 and Asn200. N-linked (GlcNAc...) asparagine glycosylation is found at Asn422 and Asn498. Ca(2+) contacts are provided by Glu527, Val530, and Asp531. A helical transmembrane segment spans residues 563–583; the sequence is FAVWACIAAAIPVVGVLIFVL. Residues 584–637 are Cytoplasmic-facing; the sequence is NRIQAVRSQSATQPRPSASATLHSAIWIVYGAFVQQGGESSVNSVAMRIVMGSW. The helical transmembrane segment at 638–658 threads the bilayer; it reads WLFTLIVCSSYTANLAAFLTV. Residues 659–830 lie on the Extracellular side of the membrane; it reads SRMDNPIRTF…TEGKSLKLHS (172 aa). Ca(2+) is bound by residues Asp753, Asp755, and Ser757. The chain crosses the membrane as a helical span at residues 831–851; sequence FAGVFCILAIGLLLACLVAAL. Residues 852 to 1009 are Cytoplasmic-facing; it reads ELWWNSNRCH…ALDTSHGTSI (158 aa). Residues 931–942 show a composition bias toward polar residues; the sequence is LPEQSSHGTSRT. Residues 931–960 form a disordered region; sequence LPEQSSHGTSRTLSSGPSSNLPLPLSSSAT. Residues 943 to 958 show a composition bias toward low complexity; sequence LSSGPSSNLPLPLSSS.

The protein belongs to the glutamate-gated ion channel (TC 1.A.10.1) family. GRID1 subfamily. Homodimer. Interacts (via extracellular N-terminal domain) with CBLN1 (via C1q domain), and more weakly with CBLN2; the interactions mediate the trans-synaptic adhesion complexes also with neurexins and are required for ligand-gated cation channel activity. Equally in forebrain and cerebellum.

Its subcellular location is the postsynaptic cell membrane. It carries out the reaction Ca(2+)(in) = Ca(2+)(out). It catalyses the reaction Na(+)(in) = Na(+)(out). Member of the ionotropic glutamate receptor family, which plays a crucial role in synaptic organization and signal transduction in the central nervous system. Although it shares structural features with ionotropic glutamate receptors, does not bind glutamate as a primary ligand. Instead, forms trans-synaptic adhesion complexes with presynaptic neurexins and cerebellins, regulating NMDA and AMPA receptor activity and influencing synaptic plasticity through signal transduction. In the presence of NRX1B-CBLN1, forms cation-selective channels that are proposed to be gated by glycine and D-serine. However, recent research disputes this ligand-gated cation channel activity. Cation-selective ion channel can be triggered by GRM1 in dopaminergic neurons. Also acts as a receptor for GABA, modulating inhibitory synaptic plasticity through non-ionotropic mechanisms. The sequence is that of Glutamate receptor ionotropic, delta-1 (Grid1) from Mus musculus (Mouse).